A 130-amino-acid polypeptide reads, in one-letter code: Classical arabinogalactan protein 7 (130 aa).

A signal peptide spans 1-21; sequence MNSKIIEAFFIVALFTTSCLA. A Pyrrolidone carboxylic acid modification is found at Q22. The segment at 22–108 is disordered; the sequence is QAPAPSPTTT…DASAPPPNAA (87 aa). 4-hydroxyproline is present on residues P24, P26, P28, P35, and P36. 5 O-linked (Ara...) hydroxyproline glycosylation sites follow: P24, P26, P28, P35, and P36. Over residues 33–68 the composition is skewed to pro residues; sequence TPPPVATPPPAATPAPTTTPPPAVSPAPTSSPPSSA. A lipid anchor (GPI-anchor amidated asparagine) is attached at N106. A propeptide spans 107–130 (removed in mature form); that stretch reads AALTNKAFVVGSLVAAIIYAVVLA.

It belongs to the classical AGP family. Post-translationally, O-glycosylated on hydroxyprolines; noncontiguous hydroxylproline residues are glycosylated with arabinogalactan.

The protein resides in the cell membrane. Its function is as follows. Proteoglycan that seems to be implicated in diverse developmental roles such as differentiation, cell-cell recognition, embryogenesis and programmed cell death. This Arabidopsis thaliana (Mouse-ear cress) protein is Classical arabinogalactan protein 7 (AGP7).